The following is a 188-amino-acid chain: Adenine phosphoribosyltransferase (188 aa).

This sequence belongs to the purine/pyrimidine phosphoribosyltransferase family. As to quaternary structure, homodimer.

Its subcellular location is the cytoplasm. It carries out the reaction AMP + diphosphate = 5-phospho-alpha-D-ribose 1-diphosphate + adenine. Its pathway is purine metabolism; AMP biosynthesis via salvage pathway; AMP from adenine: step 1/1. Its function is as follows. Catalyzes a salvage reaction resulting in the formation of AMP, that is energically less costly than de novo synthesis. This chain is Adenine phosphoribosyltransferase, found in Neisseria meningitidis serogroup B (strain ATCC BAA-335 / MC58).